Reading from the N-terminus, the 102-residue chain is NADH-quinone oxidoreductase subunit K 1 (102 aa).

Helical transmembrane passes span Thr3 to Leu23, Val29 to Phe49, and Ile62 to Ile82.

It belongs to the complex I subunit 4L family. As to quaternary structure, NDH-1 is composed of 14 different subunits. Subunits NuoA, H, J, K, L, M, N constitute the membrane sector of the complex.

It is found in the cell inner membrane. The catalysed reaction is a quinone + NADH + 5 H(+)(in) = a quinol + NAD(+) + 4 H(+)(out). NDH-1 shuttles electrons from NADH, via FMN and iron-sulfur (Fe-S) centers, to quinones in the respiratory chain. The immediate electron acceptor for the enzyme in this species is believed to be ubiquinone. Couples the redox reaction to proton translocation (for every two electrons transferred, four hydrogen ions are translocated across the cytoplasmic membrane), and thus conserves the redox energy in a proton gradient. The polypeptide is NADH-quinone oxidoreductase subunit K 1 (Syntrophobacter fumaroxidans (strain DSM 10017 / MPOB)).